Reading from the N-terminus, the 514-residue chain is Bifunctional lysine-specific demethylase and histidyl-hydroxylase NO66 (514 aa).

The tract at residues 1-53 (MKRGLEEEIEEMSEEEVGVNNNNNGKKKKKKVVKKSKPVPLTKSVPQVSSQPL) is disordered. Residues 7–17 (EEIEEMSEEEV) show a composition bias toward acidic residues. A compositionally biased stretch (basic residues) spans 25-37 (GKKKKKKVVKKSK). Residues 44-53 (SVPQVSSQPL) show a composition bias toward polar residues. A JmjC domain is found at 180 to 327 (CSVRLLNPQT…IGKVLNRALE (148 aa)). H226, D228, and H291 together coordinate Fe cation.

Belongs to the ROX family. NO66 subfamily. The cofactor is Fe(2+).

It is found in the nucleus. It catalyses the reaction N(6),N(6)-dimethyl-L-lysyl(36)-[histone H3] + 2 2-oxoglutarate + 2 O2 = L-lysyl(36)-[histone H3] + 2 formaldehyde + 2 succinate + 2 CO2. Oxygenase that can act as both a histone lysine demethylase and a ribosomal histidine hydroxylase. Specifically demethylates 'Lys-4' (H3K4me) and 'Lys-36' (H3K36me) of histone H3, thereby playing a central role in histone code. The polypeptide is Bifunctional lysine-specific demethylase and histidyl-hydroxylase NO66 (jcdg) (Dictyostelium discoideum (Social amoeba)).